We begin with the raw amino-acid sequence, 143 residues long: UPF0201 protein Pisl_1658 (143 aa).

This sequence belongs to the UPF0201 family.

This is UPF0201 protein Pisl_1658 from Pyrobaculum islandicum (strain DSM 4184 / JCM 9189 / GEO3).